A 188-amino-acid polypeptide reads, in one-letter code: uncharacterized protein (188 aa).

Residues 57–80 are disordered; it reads NDDVAPVAEGPKQERRSPSRNIGR.

It belongs to the transposase 25 family.

This is an uncharacterized protein from Sinorhizobium fredii (strain NBRC 101917 / NGR234).